The following is a 1916-amino-acid chain: Endoribonuclease Dicer (1916 aa).

The 177-residue stretch at 51–227 folds into the Helicase ATP-binding domain; that stretch reads LLEAALDHNT…ELEEKIQKLE (177 aa). Residue 64-71 coordinates ATP; sequence LNTGSGKT. The DECH box signature appears at 175–178; sequence DECH. Residues 256–595 form a required for interaction with PRKRA and TARBP2 region; the sequence is DCGPFTDRSG…LRNKCSKSAD (340 aa). The segment at 409–433 is disordered; sequence YVSWSDSEDDDDDEEIEEKEKPETN. A phosphoserine mark is found at S413 and S415. Over residues 414 to 425 the composition is skewed to acidic residues; sequence DSEDDDDDEEIE. In terms of domain architecture, Helicase C-terminal spans 433 to 602; sequence NFPSPFTNIL…SADGAEADVH (170 aa). The Dicer dsRNA-binding fold domain occupies 630 to 722; sequence AIGHINRYCA…MPVGKETVKY (93 aa). The interval 726 to 745 is disordered; it reads LDLHDEEETSVPGRPGSTKR. In terms of domain architecture, PAZ spans 895–1042; it reads KFMEDIEKSE…LVPELCAIHP (148 aa). 2 positions are modified to phosphoserine: S1016 and S1160. An RNase III 1 domain is found at 1276 to 1403; it reads DSEQSPSVGY…SEKWEKDEMT (128 aa). The Mg(2+) site is built by E1316, E1395, and E1398. S1456, S1464, and S1466 each carry phosphoserine. Positions 1598-1626 are disordered; it reads ALDPAQENGSSQQKSLSGSCAAPVGPRSS. A compositionally biased stretch (polar residues) spans 1604–1615; it reads ENGSSQQKSLSG. An RNase III 2 domain is found at 1660 to 1818; it reads FETFEKKINY…LAGAIYMDSG (159 aa). E1699, D1804, and E1807 together coordinate Mg(2+). The DRBM domain occupies 1843–1908; it reads VPRSPVRELL…ARRALRSLKA (66 aa). Phosphoserine is present on S1862.

The protein belongs to the helicase family. Dicer subfamily. Component of the RISC loading complex (RLC), or micro-RNA (miRNA) loading complex (miRLC), which is composed of DICER1, AGO2 and TARBP2; DICER1 and TARBP2 are required to process precursor miRNAs (pre-miRNAs) to mature miRNAs and then load them onto AGO2. Note that the trimeric RLC/miRLC is also referred to as RISC. Interacts with DHX9, AGO1, PIWIL1 and PRKRA. Interacts with AGO2, TARBP2, EIF6, MOV10 and RPL7A (60S ribosome subunit); they form a large RNA-induced silencing complex (RISC). Interacts with BCDIN3D. Interacts (via Dicer dsRNA-binding fold domain) with ALOX5 (via PLAT domain); this interaction enhances arachidonate 5-lipoxygenase activity and modifies the miRNA precursor processing activity of DICER1. It depends on Mg(2+) as a cofactor. Mn(2+) is required as a cofactor. In terms of tissue distribution, isoform 1 is expressed in a wide variety of tissues. Isoform 2 is specifically expressed in oocytes during their growth (at protein level).

The protein localises to the cytoplasm. It carries out the reaction Endonucleolytic cleavage to 5'-phosphomonoester.. Functionally, double-stranded RNA (dsRNA) endoribonuclease playing a central role in short dsRNA-mediated post-transcriptional gene silencing. Cleaves naturally occurring long dsRNAs and short hairpin pre-microRNAs (miRNA) into fragments of twenty-one to twenty-three nucleotides with 3' overhang of two nucleotides, producing respectively short interfering RNAs (siRNA) and mature microRNAs. SiRNAs and miRNAs serve as guide to direct the RNA-induced silencing complex (RISC) to complementary RNAs to degrade them or prevent their translation. Gene silencing mediated by siRNAs, also called RNA interference, controls the elimination of transcripts from mobile and repetitive DNA elements of the genome but also the degradation of exogenous RNA of viral origin for instance. The miRNA pathway on the other side is a mean to specifically regulate the expression of target genes. Its function is as follows. More active than isoform 1 to process long double-stranded RNA into siRNAs. Responsible for the accumulation of endogenous siRNAs observed in mouse oocytes compared to somatic cells and it regulates meiotic spindle organization in female germline. The polypeptide is Endoribonuclease Dicer (Dicer1) (Mus musculus (Mouse)).